A 158-amino-acid chain; its full sequence is Protein FAM177B (158 aa).

The span at 36-48 shows a compositional bias: acidic residues; sequence EYSTEEEEEEEKE. The interval 36 to 59 is disordered; sequence EYSTEEEEEEEKEEQSTNSTLDPS.

This sequence belongs to the FAM177 family.

The chain is Protein FAM177B (FAM177B) from Homo sapiens (Human).